A 209-amino-acid chain; its full sequence is Peptide methionine sulfoxide reductase MsrA (209 aa).

Residue cysteine 51 is part of the active site.

This sequence belongs to the MsrA Met sulfoxide reductase family.

It carries out the reaction L-methionyl-[protein] + [thioredoxin]-disulfide + H2O = L-methionyl-(S)-S-oxide-[protein] + [thioredoxin]-dithiol. The catalysed reaction is [thioredoxin]-disulfide + L-methionine + H2O = L-methionine (S)-S-oxide + [thioredoxin]-dithiol. In terms of biological role, has an important function as a repair enzyme for proteins that have been inactivated by oxidation. Catalyzes the reversible oxidation-reduction of methionine sulfoxide in proteins to methionine. This Vibrio vulnificus (strain CMCP6) protein is Peptide methionine sulfoxide reductase MsrA.